Here is a 102-residue protein sequence, read N- to C-terminus: ATP-dependent Clp protease adapter protein ClpS (102 aa).

Belongs to the ClpS family. Binds to the N-terminal domain of the chaperone ClpA.

Functionally, involved in the modulation of the specificity of the ClpAP-mediated ATP-dependent protein degradation. This chain is ATP-dependent Clp protease adapter protein ClpS, found in Shewanella putrefaciens (strain CN-32 / ATCC BAA-453).